The following is a 180-amino-acid chain: Large ribosomal subunit protein uL5c (180 aa).

Belongs to the universal ribosomal protein uL5 family. In terms of assembly, part of the 50S ribosomal subunit; contacts the 5S rRNA.

It localises to the plastid. The protein localises to the chloroplast. Binds 5S rRNA, forms part of the central protuberance of the 50S subunit. The polypeptide is Large ribosomal subunit protein uL5c (rpl5) (Chlorella vulgaris (Green alga)).